A 220-amino-acid polypeptide reads, in one-letter code: GTP cyclohydrolase 1 (220 aa).

Zn(2+) is bound by residues Cys109, His112, and Cys180.

This sequence belongs to the GTP cyclohydrolase I family. As to quaternary structure, toroid-shaped homodecamer, composed of two pentamers of five dimers.

It catalyses the reaction GTP + H2O = 7,8-dihydroneopterin 3'-triphosphate + formate + H(+). Its pathway is cofactor biosynthesis; 7,8-dihydroneopterin triphosphate biosynthesis; 7,8-dihydroneopterin triphosphate from GTP: step 1/1. The sequence is that of GTP cyclohydrolase 1 from Yersinia enterocolitica serotype O:8 / biotype 1B (strain NCTC 13174 / 8081).